The primary structure comprises 123 residues: Large ribosomal subunit protein uL22c (123 aa).

It belongs to the universal ribosomal protein uL22 family. Part of the 50S ribosomal subunit.

It is found in the plastid. It localises to the chloroplast. Its function is as follows. This protein binds specifically to 23S rRNA. The globular domain of the protein is located near the polypeptide exit tunnel on the outside of the subunit, while an extended beta-hairpin is found that lines the wall of the exit tunnel in the center of the 70S ribosome. This chain is Large ribosomal subunit protein uL22c (rpl22), found in Illicium oligandrum (Star anise).